A 305-amino-acid polypeptide reads, in one-letter code: GTPase Era (305 aa).

The 168-residue stretch at 9 to 176 (KSGFISIIGR…LDTLPKYLPE (168 aa)) folds into the Era-type G domain. The tract at residues 17–24 (GRPNVGKS) is G1. 17-24 (GRPNVGKS) is a binding site for GTP. The G2 stretch occupies residues 43–47 (QTTRN). The interval 64–67 (DTPG) is G3. GTP-binding positions include 64 to 68 (DTPGI) and 126 to 129 (NKID). The tract at residues 126–129 (NKID) is G4. The segment at 155–157 (ISA) is G5. Residues 207–286 (TREEIPHSIA…YLELWVKVQK (80 aa)) form the KH type-2 domain.

This sequence belongs to the TRAFAC class TrmE-Era-EngA-EngB-Septin-like GTPase superfamily. Era GTPase family. Monomer.

Its subcellular location is the cytoplasm. It localises to the cell membrane. An essential GTPase that binds both GDP and GTP, with rapid nucleotide exchange. Plays a role in 16S rRNA processing and 30S ribosomal subunit biogenesis and possibly also in cell cycle regulation and energy metabolism. The sequence is that of GTPase Era from Lysinibacillus sphaericus (strain C3-41).